Here is a 153-residue protein sequence, read N- to C-terminus: Large ribosomal subunit protein uL22 (153 aa).

The tract at residues Ile-110–Glu-153 is disordered. The span at Lys-144 to Glu-153 shows a compositional bias: basic and acidic residues.

Belongs to the universal ribosomal protein uL22 family. Part of the 50S ribosomal subunit.

In terms of biological role, this protein binds specifically to 23S rRNA; its binding is stimulated by other ribosomal proteins, e.g. L4, L17, and L20. It is important during the early stages of 50S assembly. It makes multiple contacts with different domains of the 23S rRNA in the assembled 50S subunit and ribosome. Its function is as follows. The globular domain of the protein is located near the polypeptide exit tunnel on the outside of the subunit, while an extended beta-hairpin is found that lines the wall of the exit tunnel in the center of the 70S ribosome. The protein is Large ribosomal subunit protein uL22 of Mycolicibacterium smegmatis (strain ATCC 700084 / mc(2)155) (Mycobacterium smegmatis).